The chain runs to 59 residues: Small, acid-soluble spore protein H 1 (59 aa).

It belongs to the SspH family.

The protein localises to the spore core. This chain is Small, acid-soluble spore protein H 1 (sspH1), found in Bacillus anthracis.